The sequence spans 152 residues: Gamma-glutamylaminecyclotransferase C (152 aa).

Tyr9 to Leu12 provides a ligand contact to substrate. Glu84 functions as the Proton acceptor in the catalytic mechanism.

It belongs to the gamma-glutamylcyclotransferase family.

It catalyses the reaction epsilon-(gamma-L-glutamyl)-L-lysine = 5-oxo-L-proline + L-lysine. In terms of biological role, may contribute to degradation of proteins cross-linked by transglutaminases by degrading the cross-link between a lysine and a glutamic acid residue. Catalyzes the formation of 5-oxo-L-proline from L-gamma-glutamyl-L-epsilon-lysine. The polypeptide is Gamma-glutamylaminecyclotransferase C (ggact.3) (Danio rerio (Zebrafish)).